Reading from the N-terminus, the 605-residue chain is Alanine--tRNA ligase (605 aa).

Zn(2+)-binding residues include His463, His467, Cys565, and His569.

This sequence belongs to the class-II aminoacyl-tRNA synthetase family. Zn(2+) is required as a cofactor.

It localises to the cytoplasm. It catalyses the reaction tRNA(Ala) + L-alanine + ATP = L-alanyl-tRNA(Ala) + AMP + diphosphate. Its function is as follows. Catalyzes the attachment of alanine to tRNA(Ala) in a two-step reaction: alanine is first activated by ATP to form Ala-AMP and then transferred to the acceptor end of tRNA(Ala). Also edits incorrectly charged Ser-tRNA(Ala) and Gly-tRNA(Ala) via its editing domain. The protein is Alanine--tRNA ligase (alaS) of Treponema pallidum (strain Nichols).